Here is a 461-residue protein sequence, read N- to C-terminus: Serine incorporator 5 (461 aa).

Topologically, residues 1–36 are extracellular; it reads MSARCCAGQLACCCGSAGCSLCCGCCPKFRQSRTTR. A helical transmembrane segment spans residues 37 to 57; sequence FMYLFYFILVIALCCVMMTPS. Residues 58-90 are Cytoplasmic-facing; sequence VMKQVKDHIPFFEEFCKKTQAGGDACENLVGYS. A helical transmembrane segment spans residues 91-111; it reads AVYRVCFGMACFFALFCLLTL. At 112-125 the chain is on the extracellular side; sequence KVNNSKSCRAYIHN. N114 carries N-linked (GlcNAc...) asparagine glycosylation. A helical transmembrane segment spans residues 126–146; the sequence is GFWFFKLLLLGAMCSGAFFIP. The Cytoplasmic segment spans residues 147-157; that stretch reads DQETFLKVWRY. The helical transmembrane segment at 158–178 threads the bilayer; that stretch reads VGAGGSFLFICIQLLLIVQFA. The Extracellular segment spans residues 179–200; the sequence is HKWNKNWTAGTVRNKLWYASLS. A glycan (N-linked (GlcNAc...) asparagine) is linked at N184. The chain crosses the membrane as a helical span at residues 201–221; the sequence is LVTLIMYSVAVGGLALMAVFY. At 222 to 231 the chain is on the cytoplasmic side; it reads TQWDDCMDNK. Residues 232–252 traverse the membrane as a helical segment; the sequence is ILLGVHGGLCVLISLVAISPC. Topologically, residues 253–260 are extracellular; that stretch reads VQNRQPHS. A helical transmembrane segment spans residues 261 to 281; that stretch reads GLLQSGLISCYVTYLTFSALT. Residues 282–312 are Cytoplasmic-facing; sequence SKPEKKVLDEHGKNVTICAPDFGQDLHRDEN. The chain crosses the membrane as a helical span at residues 313–333; that stretch reads MVTWLGTLLLIVCISYSCLTS. Residues 334–392 lie on the Extracellular side of the membrane; the sequence is TTRSSSDALQSRYGAPELEVARCCFCFGPDGEDTEEQQNVKKGPRVIYDEKKGTVYSYS. Residues 393 to 413 form a helical membrane-spanning segment; that stretch reads YFHFVFFLASLYVMMTLTSWF. Residues 414 to 422 lie on the Cytoplasmic side of the membrane; it reads HYENATIKT. A helical membrane pass occupies residues 423–443; that stretch reads FFSGWSVFWVKMASCWMCVLL. The Extracellular segment spans residues 444-461; the sequence is YLQTLVAPLCCPSRQFSV.

This sequence belongs to the TDE1 family.

It is found in the cell membrane. The enzyme catalyses a 1,2-diacyl-sn-glycero-3-phospho-L-serine(in) = a 1,2-diacyl-sn-glycero-3-phospho-L-serine(out). It catalyses the reaction a 1,2-diacyl-sn-glycero-3-phosphocholine(in) = a 1,2-diacyl-sn-glycero-3-phosphocholine(out). The catalysed reaction is a 1,2-diacyl-sn-glycero-3-phosphoethanolamine(in) = a 1,2-diacyl-sn-glycero-3-phosphoethanolamine(out). Restriction factor required to restrict infectivity of gammaretroviruses: acts by inhibiting an early step of viral infection. Impairs the penetration of the viral particle into the cytoplasm. Non-ATP-dependent, non-specific lipid transporter for phosphatidylserine, phosphatidylcholine, and phosphatidylethanolamine. Functions as a scramblase that flips lipids in both directions across the membrane. Phospholipid scrambling results in gammaretroviral surface exposure of phosphatidylserine and loss of membrane asymmetry, which leads to loss of infectivity. Enhances the incorporation of serine into phosphatidylserine and sphingolipids. May play a role in providing serine molecules for the formation of myelin glycosphingolipids in oligodendrocytes. The chain is Serine incorporator 5 (Serinc5) from Mus musculus (Mouse).